A 1651-amino-acid polypeptide reads, in one-letter code: Protein Wiz (1651 aa).

Residues 1–79 are disordered; the sequence is MEGSLAGSLA…TPDGRGPWEH (79 aa). Glycyl lysine isopeptide (Lys-Gly) (interchain with G-Cter in SUMO2) cross-links involve residues Ala-11, Arg-14, Asn-29, Gly-32, Gly-39, Gly-42, and Glu-258. C2H2-type zinc fingers lie at residues 267-289, 304-326, and 353-375; these read FPCI…MSQH, LACG…RQLH, and LQCP…AKLH. Phe-313 is covalently cross-linked (Glycyl lysine isopeptide (Lys-Gly) (interchain with G-Cter in SUMO2)). A disordered region spans residues 376 to 399; the sequence is MREPPGQTTKEPFGGSSGAGSPSP. Over residues 386-399 the composition is skewed to low complexity; that stretch reads EPFGGSSGAGSPSP. The C2H2-type 4 zinc-finger motif lies at 416–439; the sequence is SACVFCGFPAPSESLLREHVRLVH. Residues 546–578 form a disordered region; that stretch reads LGRNKSTVHPQGLGERRRPWSEEEEEEEEEEDV. Over residues 567–578 the composition is skewed to acidic residues; that stretch reads EEEEEEEEEEDV. 2 consecutive C2H2-type zinc fingers follow at residues 701–723 and 769–791; these read RKCP…VRGH and MRCD…ARAH. The interval 819–843 is disordered; it reads AEQPPSPLGREPGGPPGSFLTSRRP. A C2H2-type 7 zinc finger spans residues 870 to 892; the sequence is TTCEVCGACFETRKGLSSHARSH. Glycyl lysine isopeptide (Lys-Gly) (interchain with G-Cter in SUMO2) cross-links involve residues Lys-883, Lys-939, Lys-955, Lys-967, and Lys-988. The segment at 972 to 1038 is disordered; it reads FSAKGLGHPP…GPLNLTSGPE (67 aa). Residues 984–994 are compositionally biased toward low complexity; it reads PLLKKTPLALA. Phosphoserine is present on Ser-996. The residue at position 998 (Thr-998) is a Phosphothreonine. Glycyl lysine isopeptide (Lys-Gly) (interchain with G-Cter in SUMO2) cross-links involve residues Lys-1000 and Lys-1005. A phosphoserine mark is found at Ser-1006, Ser-1012, Ser-1017, and Ser-1025. Residues 1030–1034 form an interaction with CTBP1 and CTBP2 1 region; that stretch reads PLNLT. The segment at 1043–1065 adopts a C2H2-type 8 zinc-finger fold; that stretch reads IRCEFCGEFFENRKGLSSHARSH. Residue Lys-1056 forms a Glycyl lysine isopeptide (Lys-Gly) (interchain with G-Cter in SUMO2) linkage. 2 positions are modified to phosphoserine: Ser-1079 and Ser-1106. The tract at residues 1091–1174 is disordered; sequence RTQSRPGGPP…PGLAAPSLPK (84 aa). Pro residues predominate over residues 1097–1106; it reads GGPPNPPGPS. Residues Lys-1108 and Lys-1112 each participate in a glycyl lysine isopeptide (Lys-Gly) (interchain with G-Cter in SUMO2) cross-link. Ser-1122, Ser-1127, and Ser-1134 each carry phosphoserine. Residues Lys-1138 and Lys-1139 each participate in a glycyl lysine isopeptide (Lys-Gly) (interchain with G-Cter in SUMO2) cross-link. A phosphoserine mark is found at Ser-1146 and Ser-1151. Position 1162 is an N6,N6,N6-trimethyllysine; by EHMT2; alternate (Lys-1162). Lys-1162 bears the N6,N6-dimethyllysine; by EHMT2; alternate mark. Residue Lys-1177 forms a Glycyl lysine isopeptide (Lys-Gly) (interchain with G-Cter in SUMO2) linkage. Positions 1214–1218 are interaction with CTBP1 and CTBP2 2; the sequence is PLNLS. Residues 1227-1249 form a C2H2-type 9 zinc finger; sequence IRCEFCGEFFENRKGLSSHARSH. A Glycyl lysine isopeptide (Lys-Gly) (interchain with G-Cter in SUMO2) cross-link involves residue Lys-1240. Phosphoserine is present on Ser-1263. Residue Lys-1282 forms a Glycyl lysine isopeptide (Lys-Gly) (interchain with G-Cter in SUMO2) linkage. The tract at residues 1283-1331 is disordered; sequence KEPPAGDLAPALAEDGPPTVAPGPVQSPLPLSPLAGRPGKPGAGPAQVP. Over residues 1301–1313 the composition is skewed to pro residues; that stretch reads TVAPGPVQSPLPL. 2 positions are modified to phosphoserine: Ser-1309 and Ser-1314. Residues 1315-1328 show a composition bias toward low complexity; it reads PLAGRPGKPGAGPA. Residues Lys-1343, Lys-1356, Lys-1370, Lys-1372, and Lys-1382 each participate in a glycyl lysine isopeptide (Lys-Gly) (interchain with G-Cter in SUMO2) cross-link. The C2H2-type 10 zinc finger occupies 1397–1419; it reads ACCELCGLYFENRKALASHARAH. Glycyl lysine isopeptide (Lys-Gly) (interchain with G-Cter in SUMO2) cross-links involve residues Lys-1448, Lys-1464, and Lys-1477. The interval 1463-1554 is disordered; it reads TKKFRSAGHG…ASAARGGEDT (92 aa). Ser-1480 is modified (phosphoserine). A compositionally biased stretch (low complexity) spans 1481–1493; it reads LGLAPGGLAVVGR. Ser-1517 is subject to Phosphoserine. Residue Lys-1523 forms a Glycyl lysine isopeptide (Lys-Gly) (interchain with G-Cter in SUMO1); alternate linkage. Lys-1523 participates in a covalent cross-link: Glycyl lysine isopeptide (Lys-Gly) (interchain with G-Cter in SUMO2); alternate. The span at 1523 to 1541 shows a compositional bias: basic and acidic residues; that stretch reads KAEEHQRQNINKFERRQAR. Residues Lys-1534 and Lys-1560 each participate in a glycyl lysine isopeptide (Lys-Gly) (interchain with G-Cter in SUMO2) cross-link. Residues 1596 to 1622 form a C2H2-type 11 zinc finger; that stretch reads LKCRFCEVEFQGPLSIQEEWVRHLQRH. The segment at 1629 to 1651 is disordered; the sequence is SKADPPPEESQAPQAQTAAAEAP. Residue Lys-1630 forms a Glycyl lysine isopeptide (Lys-Gly) (interchain with G-Cter in SUMO2) linkage. Over residues 1637 to 1651 the composition is skewed to low complexity; sequence ESQAPQAQTAAAEAP.

Belongs to the krueppel C2H2-type zinc-finger protein family. In terms of assembly, interacts with EHMT1, EHMT2, CTBP1 and CTBP2. Part of a complex containing at least CDYL, REST, WIZ, SETB1, EHMT1 and EHMT2.

It is found in the nucleus. Its function is as follows. May link EHMT1 and EHMT2 histone methyltransferases to the CTBP corepressor machinery. May be involved in EHMT1-EHMT2 heterodimer formation and stabilization. The protein is Protein Wiz (WIZ) of Homo sapiens (Human).